A 177-amino-acid chain; its full sequence is Large ribosomal subunit protein uL6 (177 aa).

This sequence belongs to the universal ribosomal protein uL6 family. In terms of assembly, part of the 50S ribosomal subunit.

In terms of biological role, this protein binds to the 23S rRNA, and is important in its secondary structure. It is located near the subunit interface in the base of the L7/L12 stalk, and near the tRNA binding site of the peptidyltransferase center. The sequence is that of Large ribosomal subunit protein uL6 from Aliivibrio salmonicida (strain LFI1238) (Vibrio salmonicida (strain LFI1238)).